Consider the following 177-residue polypeptide: Protein C (177 aa).

The span at 1–10 (MSTKAWNASR) shows a compositional bias: polar residues. The tract at residues 1 to 37 (MSTKAWNASRLSGPDPSTPWSLKKPLQHGSRPPKGKR) is disordered.

Belongs to the morbillivirus protein C family.

This is Protein C (P/V/C) from Bos indicus (Zebu).